The primary structure comprises 76 residues: uncharacterized protein (76 aa).

A helical membrane pass occupies residues 40 to 60 (IVLNLVVLVGVVPLTWMFLGQ).

The protein resides in the membrane. This is an uncharacterized protein from Dictyostelium discoideum (Social amoeba).